Consider the following 435-residue polypeptide: Gamma-glutamyl phosphate reductase (435 aa).

Belongs to the gamma-glutamyl phosphate reductase family.

The protein resides in the cytoplasm. It carries out the reaction L-glutamate 5-semialdehyde + phosphate + NADP(+) = L-glutamyl 5-phosphate + NADPH + H(+). It participates in amino-acid biosynthesis; L-proline biosynthesis; L-glutamate 5-semialdehyde from L-glutamate: step 2/2. In terms of biological role, catalyzes the NADPH-dependent reduction of L-glutamate 5-phosphate into L-glutamate 5-semialdehyde and phosphate. The product spontaneously undergoes cyclization to form 1-pyrroline-5-carboxylate. This chain is Gamma-glutamyl phosphate reductase, found in Nostoc punctiforme (strain ATCC 29133 / PCC 73102).